Here is a 589-residue protein sequence, read N- to C-terminus: uncharacterized protein (589 aa).

The next 14 membrane-spanning stretches (helical) occupy residues Tyr90–Ile110, Ser128–Met148, Ile162–Val182, Gly189–Leu209, Gly217–Ile237, Trp245–Leu265, Phe284–Gly304, Ala311–Val331, Val355–Val375, Val390–Ile410, Pro419–Tyr439, Gly448–Val468, Ala483–Tyr503, and Ile545–Phe565.

Belongs to the major facilitator superfamily. TCR/Tet family.

It is found in the membrane. This is an uncharacterized protein from Schizosaccharomyces pombe (strain 972 / ATCC 24843) (Fission yeast).